A 156-amino-acid chain; its full sequence is Transcription antitermination protein NusB (156 aa).

It belongs to the NusB family.

Its function is as follows. Involved in transcription antitermination. Required for transcription of ribosomal RNA (rRNA) genes. Binds specifically to the boxA antiterminator sequence of the ribosomal RNA (rrn) operons. The polypeptide is Transcription antitermination protein NusB (Rickettsia conorii (strain ATCC VR-613 / Malish 7)).